The chain runs to 265 residues: Interleukin-2 receptor subunit alpha (265 aa).

The N-terminal stretch at 1–21 (MDSYLLMWGLLTLIMVPGCFA) is a signal peptide. One can recognise a Sushi 1 domain in the interval 22–84 (ELCDDDPPEI…SWDNQCQCTS (63 aa)). Over 22 to 240 (ELCDDDPPEI…ETFIFTTEYQ (219 aa)) the chain is Extracellular. 3 disulfide bridges follow: Cys-24–Cys-67, Cys-49–Cys-80, and Cys-51–Cys-82. Asn-70 and Asn-89 each carry an N-linked (GlcNAc...) asparagine glycan. Polar residues predominate over residues 87-98 (TRNTTKQVTPQP). A disordered region spans residues 87 to 123 (TRNTTKQVTPQPEEQKERKTTEMQSPMQPVDQASLPG). The Sushi 2 domain maps to 123-186 (GHCREPPPWE…WTQPQLICTG (64 aa)). 2 cysteine pairs are disulfide-bonded: Cys-125–Cys-168 and Cys-152–Cys-184. A disordered region spans residues 190-210 (TSQFPGEEKPQASPEGRPESE). A compositionally biased stretch (basic and acidic residues) spans 195 to 209 (GEEKPQASPEGRPES). Residues 241 to 259 (VAVAGCVFLLISVLLLSGL) traverse the membrane as a helical segment. Residues 260–265 (TWQRRQ) are Cytoplasmic-facing.

In terms of assembly, non-covalent dimer of an alpha and a beta subunit. IL2R exists in 3 different forms: a high affinity dimer, an intermediate affinity monomer (beta subunit), and a low affinity monomer (alpha subunit). The high and intermediate affinity forms also associate with a gamma subunit.

The protein localises to the membrane. Functionally, receptor for interleukin-2. The receptor is involved in the regulation of immune tolerance by controlling regulatory T cells (TREGs) activity. TREGs suppress the activation and expansion of autoreactive T-cells. The polypeptide is Interleukin-2 receptor subunit alpha (IL2RA) (Pan troglodytes (Chimpanzee)).